Reading from the N-terminus, the 127-residue chain is Large ribosomal subunit protein bL19 (127 aa).

This sequence belongs to the bacterial ribosomal protein bL19 family.

This protein is located at the 30S-50S ribosomal subunit interface and may play a role in the structure and function of the aminoacyl-tRNA binding site. This Jannaschia sp. (strain CCS1) protein is Large ribosomal subunit protein bL19.